The primary structure comprises 481 residues: GTPase Obg (481 aa).

The Obg domain occupies 2-159; that stretch reads TTFVDRVVLH…IDVVLELKSV (158 aa). The OBG-type G domain occupies 160-330; that stretch reads ADVGLVGYPS…LMYAMGELVT (171 aa). Residues 166-173, 191-195, 212-215, 282-285, and 311-313 each bind GTP; these read GYPSAGKS, FTTLV, DVPG, NKVD, and SAA. Mg(2+)-binding residues include S173 and T193. The region spanning 348 to 426 is the OCT domain; sequence PKAVDDAGFT…IGEREFDWQP (79 aa). Residues 439–452 are compositionally biased toward basic and acidic residues; sequence GDQRLAEKSERPSA. Positions 439 to 481 are disordered; that stretch reads GDQRLAEKSERPSATERLAARKARRQRPEDEAEADEPVGDGEE. Residues 468-481 show a composition bias toward acidic residues; that stretch reads DEAEADEPVGDGEE.

Belongs to the TRAFAC class OBG-HflX-like GTPase superfamily. OBG GTPase family. As to quaternary structure, monomer. Requires Mg(2+) as cofactor.

The protein localises to the cytoplasm. In terms of biological role, an essential GTPase which binds GTP, GDP and possibly (p)ppGpp with moderate affinity, with high nucleotide exchange rates and a fairly low GTP hydrolysis rate. Plays a role in control of the cell cycle, stress response, ribosome biogenesis and in those bacteria that undergo differentiation, in morphogenesis control. This chain is GTPase Obg, found in Salinispora tropica (strain ATCC BAA-916 / DSM 44818 / JCM 13857 / NBRC 105044 / CNB-440).